A 160-amino-acid polypeptide reads, in one-letter code: Non-secretory ribonuclease (160 aa).

The N-terminal stretch at 1-27 (MVPKLFTSQICLLLLLGLMGVEGSLHA) is a signal peptide. C-linked (Man) tryptophan glycosylation occurs at Trp-34. The active-site Proton acceptor is the His-42. An N-linked (GlcNAc...) asparagine glycan is attached at Asn-44. Cystine bridges form between Cys-50–Cys-110, Cys-64–Cys-122, Cys-82–Cys-137, and Cys-89–Cys-98. 3'-nitrotyrosine is present on Tyr-60. Position 65 to 69 (65 to 69 (KNQNT)) interacts with substrate. N-linked (GlcNAc...) asparagine glycans are attached at residues Asn-92, Asn-111, and Asn-138. Residue His-155 is the Proton donor of the active site.

It belongs to the pancreatic ribonuclease family. In terms of assembly, interacts with and forms a tight 1:1 complex with RNH1. Dimerization of two such complexes may occur.

The protein localises to the lysosome. It localises to the cytoplasmic granule. It carries out the reaction an [RNA] containing cytidine + H2O = an [RNA]-3'-cytidine-3'-phosphate + a 5'-hydroxy-ribonucleotide-3'-[RNA].. The enzyme catalyses an [RNA] containing uridine + H2O = an [RNA]-3'-uridine-3'-phosphate + a 5'-hydroxy-ribonucleotide-3'-[RNA].. In terms of biological role, this is a non-secretory ribonuclease. It is a pyrimidine specific nuclease with a slight preference for U. Cytotoxin and helminthotoxin. Possesses a wide variety of biological activities. The polypeptide is Non-secretory ribonuclease (RNASE2) (Macaca fascicularis (Crab-eating macaque)).